We begin with the raw amino-acid sequence, 283 residues long: uncharacterized protein (283 aa).

This is an uncharacterized protein from Halobacterium salinarum (strain ATCC 700922 / JCM 11081 / NRC-1) (Halobacterium halobium).